Consider the following 1203-residue polypeptide: Potassium/sodium hyperpolarization-activated cyclic nucleotide-gated channel 4 (1203 aa).

The interval 1–182 (MDKLPPSMRK…QPASASCEQP (182 aa)) is disordered. At 1-263 (MDKLPPSMRK…IIHPYSDFRF (263 aa)) the chain is on the cytoplasmic side. Acidic residues predominate over residues 26–36 (MDEEEDAEEEG). The span at 105–117 (SRGGGSGGTGSGS) shows a compositional bias: gly residues. Over residues 121 to 133 (HLHDSAEERRLIA) the composition is skewed to basic and acidic residues. The residue at position 138 (Ser138) is a Phosphoserine. Positions 163-174 (ASPPPPQQPPQP) are enriched in pro residues. Residues 209–260 (GQAGFMQRQFGAMLQPGVNKFSLRMFGSQKAVEREQERVKSAGFWIIHPYSD) form an involved in subunit assembly region. Residues 264–286 (YWDLTMLLLMVGNLIIIPVGITF) traverse the membrane as a helical segment. The Extracellular segment spans residues 287–293 (FKDENTT). The helical transmembrane segment at 294–314 (PWIVFNVVSDTFFLIDLVLNF) threads the bilayer. Over 315-336 (RTGIVVEDNTEIILDPQRIKMK) the chain is Cytoplasmic. Residues 337 to 359 (YLKSWFMVDFISSIPVDYIFLIV) form a helical membrane-spanning segment. Residues 360–378 (ETRIDSEVYKTARALRIVR) lie on the Extracellular side of the membrane. A helical; Voltage-sensor transmembrane segment spans residues 379 to 399 (FTKILSLLRLLRLSRLIRYIH). Residues 400 to 413 (QWEEIFHMTYDLAS) are Cytoplasmic-facing. Residues 414 to 436 (AVVRIVNLIGMMLLLCHWDGCLQ) traverse the membrane as a helical segment. At 437-464 (FLVPMLQDFPDDCWVSINNMVNNSWGKQ) the chain is on the extracellular side. The N-linked (GlcNAc...) asparagine glycan is linked to Asn458. The pore-forming intramembrane region spans 465-486 (YSYALFKAMSHMLCIGYGRQAP). The Extracellular portion of the chain corresponds to 487–491 (VGMSD). The helical transmembrane segment at 492–517 (VWLTMLSMIVGATCYAMFIGHATALI) threads the bilayer. The Cytoplasmic portion of the chain corresponds to 518–1203 (QSLDSSRRQY…PVRSKLPSNL (686 aa)). 3',5'-cyclic GMP-binding residues include Tyr559, Lys562, Phe564, and Glu566. 3',5'-cyclic AMP contacts are provided by Gly659, Glu660, Cys662, Arg669, Thr670, Val673, and Arg710. Disordered stretches follow at residues 836–856 (ALGS…SSSS), 870–897 (GLSP…TPSA), and 918–1203 (LSSS…PSNL). 2 stretches are compositionally biased toward low complexity: residues 918-941 (LSSS…AAQP) and 966-986 (RSPS…SLGL). Residues 995-1004 (ETPPRQPEPP) show a composition bias toward pro residues. Positions 1005–1028 (SLVAGASGGASPVGFTPRGGLSPP) are enriched in low complexity. Residues 1029–1042 (GHSPGPPRTFPSAP) show a composition bias toward pro residues. Residues 1045-1056 (ASGSHGSLLLPP) show a composition bias toward low complexity. Phosphoserine is present on residues Ser1105 and Ser1108. The span at 1122–1137 (AGGGSGGSGSSGGLGP) shows a compositional bias: gly residues.

Belongs to the potassium channel HCN family. As to quaternary structure, homotetramer. The channel assemble into homotetramers or heteromeric complexes that contains of four pore-forming subunits. Interacts with PEX5L with a 4:4 HCN4:PEX5L stoichiometry; reduces the effects of cAMP on the voltage-dependence and rate of activation. Interacts with IRAG1; regulates HCN4 channel activity. Interacts with IRAG2; regulates HCN4 channel activity. In terms of processing, S-palmitoylated. In terms of tissue distribution, highly expressed in thalamus, testis and in heart, both in ventricle and atrium. Detected at much lower levels in amygdala, substantia nigra, cerebellum and hippocampus.

The protein resides in the cell membrane. The catalysed reaction is K(+)(in) = K(+)(out). It catalyses the reaction Na(+)(in) = Na(+)(out). Its activity is regulated as follows. Activated by cAMP and to a lesser extent by cGMP and cCMP. cAMP binding causes a conformation change that leads to the assembly of an active tetramer and channel opening. Binding of cAMP removes a tonic inhibition conferred by cyclic nucleotide-binding domain (CNBD) on channel opening. Cyclic dinucleotides can modulate HCN4 channel; cyclic dinucleotides acting as potent antagonists of cAMP. Inhibited by extracellular Cs(+) ions. Auxiliary subunits can also regulate HCN4 channel. IRAG1 causes a gain-of-function by shifting HCN4 activation to more depolarized membrane potentials in the absence of cAMP. In contrast, IRAG2 causes a loss-of-function by inhibiting cAMP-dependent potentiation of HCN4 activation. Its function is as follows. Hyperpolarization-activated ion channel that are permeable to Na(+) and K(+) ions with very slow activation and inactivation. Exhibits higher selectivity for K(+) over Na(+) ions. Contributes to the native pacemaker currents in heart (If) that regulate the rhythm of heart beat. Contributes to the native pacemaker currents in neurons (Ih). May mediate responses to sour stimuli. The chain is Potassium/sodium hyperpolarization-activated cyclic nucleotide-gated channel 4 from Homo sapiens (Human).